The following is a 358-amino-acid chain: DnaJ homolog subfamily C member 18 (358 aa).

The 65-residue stretch at 82-146 (NYYEILGVSR…DKRLRYDEYG (65 aa)) folds into the J domain. A helical membrane pass occupies residues 228-248 (AFIQLLPVLVIVIISVITQLL).

The protein resides in the endoplasmic reticulum membrane. (Microbial infection) In case of infection by polyomavirus, involved in the virus endoplasmic reticulum membrane penetration and infection. Regulates the recruitment of DNAJB12:DNAJB14 into SV40-induced foci and all cooperate to guide SV40 across the endoplasmic reticulum membrane. The foci represent the site from which SV40 penetrates into the cytosol. The sequence is that of DnaJ homolog subfamily C member 18 from Homo sapiens (Human).